The following is a 176-amino-acid chain: Peptide methionine sulfoxide reductase MsrA (176 aa).

Cys14 is a catalytic residue.

The protein belongs to the MsrA Met sulfoxide reductase family.

The enzyme catalyses L-methionyl-[protein] + [thioredoxin]-disulfide + H2O = L-methionyl-(S)-S-oxide-[protein] + [thioredoxin]-dithiol. The catalysed reaction is [thioredoxin]-disulfide + L-methionine + H2O = L-methionine (S)-S-oxide + [thioredoxin]-dithiol. In terms of biological role, has an important function as a repair enzyme for proteins that have been inactivated by oxidation. Catalyzes the reversible oxidation-reduction of methionine sulfoxide in proteins to methionine. In Halalkalibacterium halodurans (strain ATCC BAA-125 / DSM 18197 / FERM 7344 / JCM 9153 / C-125) (Bacillus halodurans), this protein is Peptide methionine sulfoxide reductase MsrA.